A 692-amino-acid polypeptide reads, in one-letter code: MALLLVSLLAFLGTGSGCHHWLCHCSNRVFLCQDSKVTEIPTDLPRNAIELRFVLTKLRVIPKGSFAGFGDLEKIEISQNDVLEVIEADVFSNLPKLHEIRIEKANNLLYINPEAFQNLPSLRYLLISNTGIKHLPAVHKIQSLQKVLLDIQDNINIHIVARNSFMGLSFESVILWLSKNGIEEIHNCAFNGTQLDELNLSDNNNLEELPNDVFQGASGPVILDISRTKVHSLPNHGLENLKKLRARSTYRLKKLPNLDKFVTLMEASLTYPSHCCAFANLKRQISELHPICNKSILRQDIDDMTQIGDQRVSLIDDEPSYGKGSDMMYNEFDYDLCNEVVDVTCSPKPDAFNPCEDIMGYNILRVLIWFISILAITGNTTVLVVLTTSQYKLTVPRFLMCNLAFADLCIGIYLLLIASVDIHTKSQYHNYAIDWQTGAGCDAAGFFTVFASELSVYTLTAITLERWHTITHAMQLECKVQLRHAASVMVLGWTFAFAAALFPIFGISSYMKVSICLPMDIDSPLSQLYVMALLVLNVLAFVVICGCYTHIYLTVRNPTIVSSSSDTKIAKRMATLIFTDFLCMAPISFFAISASLKVPLITVSKAKILLVLFYPINSCANPFLYAIFTKNFRRDFFILLSKFGCYEMQAQIYRTETSSATHNFHARKSHCSSAPRVTNSYVLVPLNHSSQN.

An N-terminal signal peptide occupies residues 1-17 (MALLLVSLLAFLGTGSG). Cystine bridges form between C18–C25 and C23–C32. One can recognise an LRRNT domain in the interval 18-46 (CHHWLCHCSNRVFLCQDSKVTEIPTDLPR). Residues 18 to 365 (CHHWLCHCSN…EDIMGYNILR (348 aa)) are Extracellular-facing. LRR repeat units follow at residues 49–72 (IELRFVLTKLRVIPKGSFAGFGDL), 73–97 (EKIEISQNDVLEVIEADVFSNLPKL), 98–118 (HEIRIEKANNLLYINPEAFQN), 119–143 (LPSLRYLLISNTGIKHLPAVHKIQS), 144–169 (LQKVLLDIQDNINIHIVARNSFMGLS), 170–192 (FESVILWLSKNGIEEIHNCAFNG), 193–216 (TQLDELNLSDNNNLEELPNDVFQG), 217–240 (ASGPVILDISRTKVHSLPNHGLEN), and 241–259 (LKKLRARSTYRLKKLPNLD). N191 and N199 each carry an N-linked (GlcNAc...) asparagine glycan. 4 disulfide bridges follow: C275-C345, C276-C292, C276-C355, and C292-C337. N293 carries N-linked (GlcNAc...) asparagine glycosylation. At Y334 the chain carries Sulfotyrosine. Residues 366–386 (VLIWFISILAITGNTTVLVVL) form a helical membrane-spanning segment. The Cytoplasmic portion of the chain corresponds to 387–397 (TTSQYKLTVPR). Residues 398–420 (FLMCNLAFADLCIGIYLLLIASV) traverse the membrane as a helical segment. The Extracellular portion of the chain corresponds to 421–442 (DIHTKSQYHNYAIDWQTGAGCD). A disulfide bridge links C441 with C516. The chain crosses the membrane as a helical span at residues 443 to 464 (AAGFFTVFASELSVYTLTAITL). Residues 465 to 484 (ERWHTITHAMQLECKVQLRH) are Cytoplasmic-facing. Residues 485 to 507 (AASVMVLGWTFAFAAALFPIFGI) traverse the membrane as a helical segment. Residues 508–527 (SSYMKVSICLPMDIDSPLSQ) lie on the Extracellular side of the membrane. A helical membrane pass occupies residues 528-549 (LYVMALLVLNVLAFVVICGCYT). Residues 550–572 (HIYLTVRNPTIVSSSSDTKIAKR) lie on the Cytoplasmic side of the membrane. The chain crosses the membrane as a helical span at residues 573 to 596 (MATLIFTDFLCMAPISFFAISASL). The Extracellular portion of the chain corresponds to 597-607 (KVPLITVSKAK). The helical transmembrane segment at 608 to 629 (ILLVLFYPINSCANPFLYAIFT) threads the bilayer. Topologically, residues 630–692 (KNFRRDFFIL…LVPLNHSSQN (63 aa)) are cytoplasmic.

The protein belongs to the G-protein coupled receptor 1 family. FSH/LSH/TSH subfamily. Homotrimer. Functions as a homotrimer binding the FSH hormone heterodimer composed of CGA and FSHB. Interacts with ARRB2. Interacts with APPL2; interaction is independent of follicle stimulating hormone stimulation. Post-translationally, N-glycosylated; indirectly required for FSH-binding, possibly via a conformational change that allows high affinity binding of hormone. In terms of processing, sulfated. In terms of tissue distribution, sertoli cells and ovarian granulosa cells.

It localises to the cell membrane. In terms of biological role, g protein-coupled receptor for follitropin, the follicle-stimulating hormone. Through cAMP production activates the downstream PI3K-AKT and ERK1/ERK2 signaling pathways. This Rattus norvegicus (Rat) protein is Follicle-stimulating hormone receptor (Fshr).